A 368-amino-acid polypeptide reads, in one-letter code: Probable magnesium transporter (368 aa).

Residues 1-4 (MEDK) lie on the Extracellular side of the membrane. The chain crosses the membrane as a helical span at residues 5 to 25 (YIGLALAMSSSLAIGTSFIIT). At 26–50 (KKGLMDASARTGGTDGVQASDYLQN) the chain is on the cytoplasmic side. Residues 51 to 71 (PIWWGGMITMAIGEIANFAAY) traverse the membrane as a helical segment. The Extracellular segment spans residues 72–76 (TFAPA). Residues 77-97 (ILVTPLGALSVIIGAVLAAIF) traverse the membrane as a helical segment. Topologically, residues 98–101 (LKER) are cytoplasmic. A helical transmembrane segment spans residues 102–122 (LGTLGKMGCAICLMGSVIIIL). At 123-143 (HAPPDKEVQTVDEILGYATQP) the chain is on the extracellular side. A helical membrane pass occupies residues 144–164 (GFMFYCTVVTLYSLFMIYKIV). Residues 165–175 (PKYGNTNPMIY) lie on the Cytoplasmic side of the membrane. A helical transmembrane segment spans residues 176–196 (LSICSSVGSISVMSIKAFGIA). The Extracellular segment spans residues 197–206 (LKLTLGGNNQ). The helical transmembrane segment at 207-227 (FTHVSTYLFLIVVALCIVTQM) threads the bilayer. Residues 228–240 (NYFNKALDQFDTS) are Cytoplasmic-facing. A helical transmembrane segment spans residues 241–261 (IVNPLYYVTFTTFTLAASFIL). The Extracellular segment spans residues 262 to 269 (FKGFNTSS). Asn-266 carries an N-linked (GlcNAc...) asparagine glycan. A helical membrane pass occupies residues 270–290 (AVDIISLLIGFLIIFSGVYLL). The Cytoplasmic segment spans residues 291–368 (NISRSESPMV…GDEDTRNYRH (78 aa)).

The protein belongs to the NIPA family.

The protein resides in the cell membrane. It is found in the early endosome. The enzyme catalyses Mg(2+)(in) = Mg(2+)(out). In terms of biological role, probably acts as a selective Mg(2+) transporter. Plays a role in cell wall integrity and in engulfment by host macrophages. The chain is Probable magnesium transporter from Candida albicans (strain SC5314 / ATCC MYA-2876) (Yeast).